Here is a 302-residue protein sequence, read N- to C-terminus: Heat stress transcription factor B-1 (302 aa).

Residues 1-15 (MAAAEAAAAVGKQQQ) are compositionally biased toward low complexity. Disordered stretches follow at residues 1–33 (MAAA…PFLT) and 116–184 (GIRR…RKDN). The segment covering 16–28 (KGGGGRGGGGGGP) has biased composition (gly residues). Residues 123–133 (TTPQSSKSCGS) show a composition bias toward polar residues. Residues 139-150 (FPPPLPPLPPEP) show a composition bias toward pro residues. The segment covering 151-172 (SATTSSGNDRSSSSASSPPRAD) has biased composition (low complexity). Residues 170 to 202 (RADITSENEQLRKDNQTLTMELARARRHCEELL) adopt a coiled-coil conformation. The interval 180–209 (LRKDNQTLTMELARARRHCEELLGFLSRFL) is hydrophobic repeat HR-A/B. The short motif at 211–218 (VRQLDLRL) is the Nuclear export signal element. The Nuclear localization signal signature appears at 263-267 (RKRAR).

Belongs to the HSF family. Class B subfamily. In terms of assembly, homotrimer. In terms of processing, exhibits temperature-dependent phosphorylation.

It is found in the cytoplasm. The protein resides in the nucleus. Transcriptional regulator that specifically binds DNA of heat shock promoter elements (HSE). This is Heat stress transcription factor B-1 (HSFB1) from Oryza sativa subsp. japonica (Rice).